The primary structure comprises 185 residues: Ribosome-recycling factor (185 aa).

It belongs to the RRF family.

Its subcellular location is the cytoplasm. In terms of biological role, responsible for the release of ribosomes from messenger RNA at the termination of protein biosynthesis. May increase the efficiency of translation by recycling ribosomes from one round of translation to another. This chain is Ribosome-recycling factor, found in Mycobacterium avium (strain 104).